The sequence spans 227 residues: Cytochrome c oxidase subunit 2 (227 aa).

Over 1-14 (MAYPMQLGFQDATS) the chain is Mitochondrial intermembrane. The chain crosses the membrane as a helical span at residues 15-45 (PIMEELLHFHDHTLMIVFLISSLVLYIISLM). The Mitochondrial matrix portion of the chain corresponds to 46-59 (LTTKLTHTSTMDAQ). The chain crosses the membrane as a helical span at residues 60 to 87 (EVETIWTILPAIILILIALPSLRILYMM). Residues 88–227 (DEINNPSLTV…YFEKWSASML (140 aa)) lie on the Mitochondrial intermembrane side of the membrane. Residues histidine 161, cysteine 196, glutamate 198, cysteine 200, histidine 204, and methionine 207 each coordinate Cu cation. Residue glutamate 198 participates in Mg(2+) binding. Residue tyrosine 218 is modified to Phosphotyrosine.

The protein belongs to the cytochrome c oxidase subunit 2 family. Component of the cytochrome c oxidase (complex IV, CIV), a multisubunit enzyme composed of 14 subunits. The complex is composed of a catalytic core of 3 subunits MT-CO1, MT-CO2 and MT-CO3, encoded in the mitochondrial DNA, and 11 supernumerary subunits COX4I, COX5A, COX5B, COX6A, COX6B, COX6C, COX7A, COX7B, COX7C, COX8 and NDUFA4, which are encoded in the nuclear genome. The complex exists as a monomer or a dimer and forms supercomplexes (SCs) in the inner mitochondrial membrane with NADH-ubiquinone oxidoreductase (complex I, CI) and ubiquinol-cytochrome c oxidoreductase (cytochrome b-c1 complex, complex III, CIII), resulting in different assemblies (supercomplex SCI(1)III(2)IV(1) and megacomplex MCI(2)III(2)IV(2)). Found in a complex with TMEM177, COA6, COX18, COX20, SCO1 and SCO2. Interacts with TMEM177 in a COX20-dependent manner. Interacts with COX20. Interacts with COX16. The cofactor is Cu cation.

The protein localises to the mitochondrion inner membrane. It carries out the reaction 4 Fe(II)-[cytochrome c] + O2 + 8 H(+)(in) = 4 Fe(III)-[cytochrome c] + 2 H2O + 4 H(+)(out). Functionally, component of the cytochrome c oxidase, the last enzyme in the mitochondrial electron transport chain which drives oxidative phosphorylation. The respiratory chain contains 3 multisubunit complexes succinate dehydrogenase (complex II, CII), ubiquinol-cytochrome c oxidoreductase (cytochrome b-c1 complex, complex III, CIII) and cytochrome c oxidase (complex IV, CIV), that cooperate to transfer electrons derived from NADH and succinate to molecular oxygen, creating an electrochemical gradient over the inner membrane that drives transmembrane transport and the ATP synthase. Cytochrome c oxidase is the component of the respiratory chain that catalyzes the reduction of oxygen to water. Electrons originating from reduced cytochrome c in the intermembrane space (IMS) are transferred via the dinuclear copper A center (CU(A)) of subunit 2 and heme A of subunit 1 to the active site in subunit 1, a binuclear center (BNC) formed by heme A3 and copper B (CU(B)). The BNC reduces molecular oxygen to 2 water molecules using 4 electrons from cytochrome c in the IMS and 4 protons from the mitochondrial matrix. This chain is Cytochrome c oxidase subunit 2 (MT-CO2), found in Syncerus caffer (African buffalo).